The sequence spans 837 residues: A disintegrin and metalloproteinase with thrombospondin motifs 4 (837 aa).

The signal sequence occupies residues 1 to 51; it reads MSQTGSHPGRGLAGRWLWGAQPCLLLPIVPLSWLVWLLLLLLASLLPSARL. A propeptide spanning residues 52–212 is cleaved from the precursor; it reads ASPLPREEEI…PSPRPRRAKR (161 aa). A glycan (N-linked (GlcNAc...) asparagine) is linked at asparagine 68. Positions 166 to 191 are disordered; sequence EGGTPNSAGGPGAHILRRKSPASGQG. Positions 192–199 match the Cysteine switch motif; it reads PMCNVKAP. Cysteine 194 serves as a coordination point for Zn(2+). The 211-residue stretch at 218-428 folds into the Peptidase M12B domain; the sequence is RFVETLVVAD…GYGHCLLDKP (211 aa). Intrachain disulfides connect cysteine 293/cysteine 345, cysteine 322/cysteine 327, cysteine 339/cysteine 423, cysteine 377/cysteine 407, cysteine 449/cysteine 472, cysteine 460/cysteine 482, cysteine 467/cysteine 501, cysteine 495/cysteine 506, cysteine 532/cysteine 569, cysteine 536/cysteine 574, and cysteine 547/cysteine 559. Position 361 (histidine 361) interacts with Zn(2+). The active site involves glutamate 362. Residues histidine 365 and histidine 371 each contribute to the Zn(2+) site. The Disintegrin domain occupies 437 to 519; the sequence is TFPGKDYDAD…DQLQDFNIPQ (83 aa). The region spanning 520 to 575 is the TSP type-1 domain; the sequence is AGGWGPWGPWGDCSRTCGGGVQFSSRDCTRPVPRNGGKYCEGRRTRFRSCNTEDCP. A spacer region spans residues 686 to 837; it reads SKQSGSFRKF…LRRRPWVGRK (152 aa).

As to quaternary structure, interacts with SRPX2. It depends on Zn(2+) as a cofactor. In terms of processing, the precursor is cleaved by a furin endopeptidase. Glycosylated. Can be O-fucosylated by POFUT2 on a serine or a threonine residue found within the consensus sequence C1-X(2)-(S/T)-C2-G of the TSP type-1 repeat domains where C1 and C2 are the first and second cysteine residue of the repeat, respectively. Fucosylated repeats can then be further glycosylated by the addition of a beta-1,3-glucose residue by the glucosyltransferase, B3GALTL. Fucosylation mediates the efficient secretion of ADAMTS family members. Can also be C-glycosylated with one or two mannose molecules on tryptophan residues within the consensus sequence W-X-X-W of the TPRs, and N-glycosylated. These other glycosylations can also facilitate secretion.

The protein localises to the secreted. It is found in the extracellular space. The protein resides in the extracellular matrix. The catalysed reaction is Glutamyl endopeptidase. Bonds cleaved include 370-Thr-Glu-Gly-Glu-|-Ala-Arg-Gly-Ser-377 in the interglobular domain of mammalian aggrecan.. Cleaves aggrecan, a cartilage proteoglycan, at the '392-Glu-|-Ala-393' site and may be involved in its turnover. Also cleaves COMP. May play an important role in the destruction of aggrecan in arthritic diseases. The polypeptide is A disintegrin and metalloproteinase with thrombospondin motifs 4 (ADAMTS4) (Pongo abelii (Sumatran orangutan)).